The following is a 210-amino-acid chain: Probable GTP-binding protein EngB (210 aa).

The EngB-type G domain maps to 25 to 199 (TGIEVAFAGR…RQKLDTWFSE (175 aa)). GTP is bound by residues 33-40 (GRSNAGKS), 60-64 (GRTQL), 78-81 (DLPG), 145-148 (TKAD), and 178-180 (FSS). Residues Ser40 and Thr62 each coordinate Mg(2+).

This sequence belongs to the TRAFAC class TrmE-Era-EngA-EngB-Septin-like GTPase superfamily. EngB GTPase family. Mg(2+) serves as cofactor.

Its function is as follows. Necessary for normal cell division and for the maintenance of normal septation. The chain is Probable GTP-binding protein EngB from Escherichia coli O6:H1 (strain CFT073 / ATCC 700928 / UPEC).